Consider the following 372-residue polypeptide: L-selectin (372 aa).

Positions 1-28 (MIFPRKCQSTQRDLWNIFKLWGWTMLCC) are cleaved as a signal peptide. The propeptide occupies 29-38 (DFLAHHGTDC). Topologically, residues 39–332 (WTYHYSENPM…FSMIKEGDYN (294 aa)) are extracellular. Residues 55 to 155 (RFCRENYTDL…ACHKPKAALC (101 aa)) form the C-type lectin domain. 10 disulfides stabilise this stretch: C57/C155, C128/C147, C128/C160, C160/C171, C165/C180, C182/C191, C197/C241, C227/C254, C259/C303, and C289/C316. 2 N-linked (GlcNAc...) asparagine glycosylation sites follow: N60 and N104. The Ca(2+) site is built by E118, N120, E126, N143, and D144. The EGF-like domain maps to 156 to 192 (YTASCQPWSCSGHGECVEIINNYTCNCDVGYYGPQCQ). The N-linked (GlcNAc...) asparagine glycan is linked to N177. 2 consecutive Sushi domains span residues 195 to 256 (IQCE…TCQV) and 257 to 318 (IQCE…ICQK). N-linked (GlcNAc...) asparagine glycans are attached at residues N226, N232, N246, and N271. The chain crosses the membrane as a helical span at residues 333–355 (PLFIPVAVMVTAFSGLAFIIWLA). The Cytoplasmic portion of the chain corresponds to 356–372 (RRLKKGKKSKKSMDDPY).

The protein belongs to the selectin/LECAM family. Interaction with SELPLG/PSGL1 and PODXL2 is required for promoting recruitment and rolling of leukocytes. This interaction is dependent on the sialyl Lewis X glycan modification of SELPLG and PODXL2, and tyrosine sulfation modifications of SELPLG. Sulfation on 'Tyr-51' of SELPLG is important for L-selectin binding. In terms of processing, N-glycosylated.

The protein localises to the cell membrane. Calcium-dependent lectin that mediates cell adhesion by binding to glycoproteins on neighboring cells. Mediates the adherence of lymphocytes to endothelial cells of high endothelial venules in peripheral lymph nodes. Promotes initial tethering and rolling of leukocytes in endothelia. This chain is L-selectin (SELL), found in Macaca mulatta (Rhesus macaque).